The following is a 530-amino-acid chain: Zinc finger protein ZIC 4 (530 aa).

Composition is skewed to basic residues over residues H31–P40 and N97–A113. 2 disordered regions span residues H31–P50 and P87–S138. A C2H2-type 1; atypical zinc finger spans residues L284 to H317. The segment at H326–H353 adopts a C2H2-type 2; atypical zinc-finger fold. 3 consecutive C2H2-type zinc fingers follow at residues F359 to H383, F389 to H413, and Y419 to H443. The interval H432 to F530 is disordered. Residues S435–C444 show a composition bias toward basic residues. 2 stretches are compositionally biased toward low complexity: residues S455–S467 and T474–Q485. Polar residues predominate over residues S520–F530.

The protein belongs to the GLI C2H2-type zinc-finger protein family. As to expression, at mid-gastrula stage (stage 11.5), weakly expressed in the prospective neural fold. Expressed in the neural plate border region at early neurula stage (stage 15) with strongest expression in the prospective regions of the hyoid and branchial crests. Expression in the dorsal central nervous system (CNS) continues through late neurula stage and early tail bud stages with expression strongest in the olfactory placode and expression levels increasing as development progresses. Becomes expressed in somites.

It localises to the nucleus. May bind to DNA. Induces neural and neural crest differentiation. Does not induce anterior neural tissue. The polypeptide is Zinc finger protein ZIC 4 (zic4) (Xenopus laevis (African clawed frog)).